The following is a 401-amino-acid chain: uncharacterized protein (401 aa).

This is an uncharacterized protein from Mycobacterium tuberculosis (strain CDC 1551 / Oshkosh).